A 91-amino-acid chain; its full sequence is Putative regulatory protein PTH_1796 (91 aa).

It belongs to the RemA family.

This is Putative regulatory protein PTH_1796 from Pelotomaculum thermopropionicum (strain DSM 13744 / JCM 10971 / SI).